The sequence spans 402 residues: MGSYSSDDVEVIREAGRAQGLATILAIGTATPPNCVAQADYADYYFRVTKSEHMVDLKEKFKRICEKTAIKKRYLALTEDYLQENPTMCEFMAPSLNARQDLVVTGVPMLGKEAAVKAIDEWGLPKSKITHLIFCTTAGVDMPGADYQLVKLLGLSPSVKRYMLYQQGCAAGGTVLRLAKDLAENNKGSRVLIVCSEITAILFHGPNENHLDSLVAQALFGDGAAALIVGSGPHLAVERPIFEIVSTDQTILPDTEKAMKLHLREGGLTFQLHRDVPLMVAKNIENAAEKALSPLGITDWNSVFWMVHPGGRAILDQVERKLNLKEDKLRASRHVLSEYGNLISACVLFIIDEVRKRSMAEGKSTTGEGLDCGVLFGFGPGMTVETVVLRSVRVTAAVANGN.

Acetoacetyl-CoA-binding residues include lysine 60, arginine 63, cysteine 169, leucine 272, arginine 274, glycine 310, arginine 312, and alanine 313. Cysteine 169 is a catalytic residue.

The protein belongs to the thiolase-like superfamily. Chalcone/stilbene synthases family. As to expression, expressed in both vegetative and reproductive organs. The expression is strong in the leaf, scape (the inflorescence stem) and corolla (both in the ligule and the unpigmented tube), moderate in the bract and carpel, detectable in the root and pappus but not detectable in the stamen.

The catalysed reaction is 2 malonyl-CoA + acetyl-CoA + 2 H(+) = triacetate lactone + 2 CO2 + 3 CoA. Functionally, polyketide synthase, which uses acetyl-CoA and two condensation reactions with malonyl-CoA to form triacetic acid lactone (also called methylpyrone), a precursor of phytoalexin. May participate in insect and pathogen resistance. The polypeptide is 2-pyrone synthase (Gerbera hybrida (Daisy)).